The chain runs to 121 residues: Large ribosomal subunit protein uL18 (121 aa).

Belongs to the universal ribosomal protein uL18 family. Part of the 50S ribosomal subunit; part of the 5S rRNA/L5/L18/L25 subcomplex. Contacts the 5S and 23S rRNAs.

In terms of biological role, this is one of the proteins that bind and probably mediate the attachment of the 5S RNA into the large ribosomal subunit, where it forms part of the central protuberance. This chain is Large ribosomal subunit protein uL18, found in Burkholderia ambifaria (strain MC40-6).